The following is a 508-amino-acid chain: Purine-cytosine permease fcyB (508 aa).

Residues 1-72 (MAGAFDFDLE…AEQTDTSVFN (72 aa)) lie on the Cytoplasmic side of the membrane. A helical membrane pass occupies residues 73–93 (IGSMWLAANMVVSSFAIGVLG). Residues 94–104 (KSVYSLGFVDA) lie on the Extracellular side of the membrane. The helical transmembrane segment at 105–125 (ILTVLFFNLLGIMTVCFFSCF) threads the bilayer. The Cytoplasmic segment spans residues 126 to 147 (GPFGLRQMVFSRLWFGWYVTKG). The helical transmembrane segment at 148 to 168 (FAVLNILACLGWSAANAIVGA) threads the bilayer. Residues 169–177 (QMLHAVNSD) are Extracellular-facing. A helical membrane pass occupies residues 178 to 198 (VPGFAAILIISICTLLVTFAG). Topologically, residues 199–200 (YK) are cytoplasmic. Residues 201–221 (VVHLYEYWSWIPTFIVFMIIL) form a helical membrane-spanning segment. Topologically, residues 222 to 243 (GTFAHSGDFQNIPMGVGTSEMG) are extracellular. Residues 244–264 (SVLSFGSAVYGFATGWTSYAA) traverse the membrane as a helical segment. The Cytoplasmic segment spans residues 265 to 278 (DYTVYQPANRSKRK). Residues 279–299 (IFLSTWLGLIVPLLFVEMLGV) form a helical membrane-spanning segment. Residues 300–323 (AVMTATDIKGSKYDVGYATSGNGG) lie on the Extracellular side of the membrane. The helical transmembrane segment at 324-344 (LIAAVLQPLGGFGDFCLVILA) threads the bilayer. Topologically, residues 345-374 (LSIVANNCPNFYSVALTVQVLSRYAQRVPR) are cytoplasmic. The helical transmembrane segment at 375–395 (FIWTLFGTGVSIAIAIPGYSH) threads the bilayer. Topologically, residues 396–404 (FETVLENFM) are extracellular. A helical membrane pass occupies residues 405 to 425 (NFIAYWLAIYSAIAIMDHFVF). Topologically, residues 426 to 442 (KRGFSGYVVENFDKREK) are cytoplasmic. A helical transmembrane segment spans residues 443 to 463 (LPVGIAATIAFGFGVAGMITG). The Extracellular portion of the chain corresponds to 464–477 (MSQPWYVGPIARHA). The helical transmembrane segment at 478-498 (AGGDVGFELGFAFAAFSYLCL) threads the bilayer. Residues 499–508 (RPFEIKFFGR) are Cytoplasmic-facing.

Belongs to the purine-cytosine permease (2.A.39) family.

Its subcellular location is the cell membrane. Functionally, this permease has a broad specificity towards purines, and also transports cytosine, but neither uracil nor thymine. Contributes very little in purine uptake. Its major role may be the uptake of cytosine. This Emericella nidulans (strain FGSC A4 / ATCC 38163 / CBS 112.46 / NRRL 194 / M139) (Aspergillus nidulans) protein is Purine-cytosine permease fcyB (fcyB).